The chain runs to 337 residues: Putative olfactory receptor 1F12P (337 aa).

The Extracellular segment spans residues 1–25 (MEGKNQTNISEFLLLGFSSWQQQQV). 2 N-linked (GlcNAc...) asparagine glycosylation sites follow: Asn-5 and Asn-8. Residues 26-49 (LLFALFLCLYLTGLFGNLLILLAI) traverse the membrane as a helical segment. The Cytoplasmic segment spans residues 50–57 (GSDHCLHT). The chain crosses the membrane as a helical span at residues 58 to 79 (PMYFFLANLSLVDLCLPSATVP). Residues 80–100 (KMLLNIQTQTQTISYPGCLAQ) lie on the Extracellular side of the membrane. Residues Cys-97 and Cys-189 are joined by a disulfide bond. Residues 101–120 (MYFCMMFANMDNFLLTVMAY) traverse the membrane as a helical segment. Over 121 to 139 (DRYVAICHPLHYSTIMALR) the chain is Cytoplasmic. Residues 140 to 158 (LCASLVAAPWVIAILNPLL) traverse the membrane as a helical segment. The Extracellular portion of the chain corresponds to 159–196 (HTLMMAHLHFCSDNVIHHFFCDINSLLPLSCSDTSLNQ). Residues 197 to 219 (LSVLATVGLIFVVPSVCILVSYI) traverse the membrane as a helical segment. Over 220-236 (LIVSAVMKVPSAQGKLK) the chain is Cytoplasmic. A helical membrane pass occupies residues 237–259 (AFSTCGSHLALVILFYGAITGVY). Over 260 to 272 (MSPLSNHSTEKDS) the chain is Extracellular. An N-linked (GlcNAc...) asparagine glycan is attached at Asn-265. A helical transmembrane segment spans residues 273-292 (AASVIFMVVAPVLNPFIYSL). Over 293–337 (RNNELKGTLKKTLSRPGAVAHACNPSTLGGRGGWIMRSGDRDHPG) the chain is Cytoplasmic.

The protein belongs to the G-protein coupled receptor 1 family.

The protein resides in the cell membrane. In terms of biological role, odorant receptor. This Homo sapiens (Human) protein is Putative olfactory receptor 1F12P.